A 481-amino-acid polypeptide reads, in one-letter code: 6-phosphogluconate dehydrogenase, decarboxylating (481 aa).

NADP(+)-binding positions include 11 to 16, 34 to 36, 76 to 78, and N104; these read GLAVMG, NRT, and VKG. Substrate is bound by residues N104 and 130–132; that span reads SGG. The Proton acceptor role is filled by K184. 187–188 lines the substrate pocket; that stretch reads HN. E191 (proton donor) is an active-site residue. Y192, K259, R286, R445, and H451 together coordinate substrate.

The protein belongs to the 6-phosphogluconate dehydrogenase family. Homodimer.

It catalyses the reaction 6-phospho-D-gluconate + NADP(+) = D-ribulose 5-phosphate + CO2 + NADPH. It functions in the pathway carbohydrate degradation; pentose phosphate pathway; D-ribulose 5-phosphate from D-glucose 6-phosphate (oxidative stage): step 3/3. In terms of biological role, catalyzes the oxidative decarboxylation of 6-phosphogluconate to ribulose 5-phosphate and CO(2), with concomitant reduction of NADP to NADPH. The polypeptide is 6-phosphogluconate dehydrogenase, decarboxylating (Pgd) (Drosophila simulans (Fruit fly)).